The chain runs to 115 residues: T cell receptor beta variable 12-5 (115 aa).

Positions 1–21 (MATRLLCCVVLCLLGEELIDA) are cleaved as a signal peptide. In terms of domain architecture, Ig-like spans 22–115 (RVTQTPRHKV…SAVYFCASGL (94 aa)). Residues Cys42 and Cys111 are joined by a disulfide bond.

Alpha-beta TR is a heterodimer composed of an alpha and beta chain; disulfide-linked. The alpha-beta TR is associated with the transmembrane signaling CD3 coreceptor proteins to form the TR-CD3 (TcR or TCR). The assembly of alpha-beta TR heterodimers with CD3 occurs in the endoplasmic reticulum where a single alpha-beta TR heterodimer associates with one CD3D-CD3E heterodimer, one CD3G-CD3E heterodimer and one CD247 homodimer forming a stable octameric structure. CD3D-CD3E and CD3G-CD3E heterodimers preferentially associate with TR alpha and TR beta chains, respectively. The association of the CD247 homodimer is the last step of TcR assembly in the endoplasmic reticulum and is required for transport to the cell surface.

The protein resides in the cell membrane. V region of the variable domain of T cell receptor (TR) beta chain that participates in the antigen recognition. Alpha-beta T cell receptors are antigen specific receptors which are essential to the immune response and are present on the cell surface of T lymphocytes. Recognize peptide-major histocompatibility (MH) (pMH) complexes that are displayed by antigen presenting cells (APC), a prerequisite for efficient T cell adaptive immunity against pathogens. Binding of alpha-beta TR to pMH complex initiates TR-CD3 clustering on the cell surface and intracellular activation of LCK that phosphorylates the ITAM motifs of CD3G, CD3D, CD3E and CD247 enabling the recruitment of ZAP70. In turn ZAP70 phosphorylates LAT, which recruits numerous signaling molecules to form the LAT signalosome. The LAT signalosome propagates signal branching to three major signaling pathways, the calcium, the mitogen-activated protein kinase (MAPK) kinase and the nuclear factor NF-kappa-B (NF-kB) pathways, leading to the mobilization of transcription factors that are critical for gene expression and essential for T cell growth and differentiation. The T cell repertoire is generated in the thymus, by V-(D)-J rearrangement. This repertoire is then shaped by intrathymic selection events to generate a peripheral T cell pool of self-MH restricted, non-autoaggressive T cells. Post-thymic interaction of alpha-beta TR with the pMH complexes shapes TR structural and functional avidity. This is T cell receptor beta variable 12-5 from Homo sapiens (Human).